A 2343-amino-acid chain; its full sequence is Pecanex-like protein 1 (2343 aa).

The next 2 helical transmembrane spans lie at 33 to 53 (ALHLYLWLFLLGLPFTLYMAL) and 57 to 77 (MIIVAVYCPVVAAVFIVLKMV). Disordered stretches follow at residues 98-163 (FTDQ…GSSR), 271-290 (SHSYRKEHRPRGVPRTSSSA), 306-691 (QQQR…TRAR), and 749-826 (TRSR…QGQQ). The span at 143-163 (SSRNSYAGLDPSNQIGSGSSR) shows a compositional bias: polar residues. Over residues 272-282 (HSYRKEHRPRG) the composition is skewed to basic residues. Low complexity predominate over residues 372–390 (SLRSLSTRSSGSTESYCSG). A compositionally biased stretch (polar residues) spans 396-412 (NSTLSSYKSEQTSSTHI). Composition is skewed to basic and acidic residues over residues 416–457 (LSEH…DKTA), 507–521 (RPPEQSAESKEEQGE), and 530–546 (KVCKDDGGKQKEGDVRP). Residues 556–571 (TSAHKPGRRRTGKKRA) are compositionally biased toward basic residues. 3 stretches are compositionally biased toward low complexity: residues 624–637 (SDSSSSATSHSCQS), 769–780 (AATGAAQASEEA), and 809–826 (TLLIGPPLSLQDGQQGQQ). 13 helical membrane-spanning segments follow: residues 978 to 998 (FWILPQLWIGINFDRLTLLAL), 1009 to 1029 (ILAVVLAILVAFLGSILLIQG), 1034 to 1054 (IWVFQFCLVIASCQYSLLKSV), 1068 to 1088 (IIAYSRPVYFCLCCGLIWLLD), 1118 to 1138 (LVIVFTLCFPIVFFIGLLPQV), 1162 to 1182 (LLAALYSFLCSVVAVALLYGL), 1195 to 1215 (HIPVLFSVFCGLLVAVSYHLS), 1268 to 1288 (LVVCVVIGVLYFAIHVSTVFT), 1296 to 1316 (YVLYALVGFVGLVTHYVLPQV), 1406 to 1426 (SFSSPTYQYITVIFTVLFFKF), 1434 to 1454 (TMLLDLFFMSILFSKLWELLY), 1458 to 1478 (FVYTYVAPWQITWGSAFHAFA), and 1493 to 1513 (AVVSALFSTPLNPFLGSAIFI). The segment at 2050–2120 (EDSDTGGGTS…VQSSLVRQSP (71 aa)) is disordered. Polar residues-rich tracts occupy residues 2060 to 2080 (CPANSATTASDPHNSVPQGST) and 2094 to 2117 (PTTSYPPTLGTSHSAHSVQSSLVR).

Belongs to the pecanex family. In terms of tissue distribution, specifically expressed in the germ line and not in the somatic cells of the testis, reaching its peak at the pachytene stage of the meiotic prophase. Detected in pachytene spermatocytes and round spermatids (at protein level).

The protein resides in the membrane. This is Pecanex-like protein 1 from Rattus norvegicus (Rat).